Reading from the N-terminus, the 142-residue chain is Transcription antitermination protein NusB (142 aa).

It belongs to the NusB family. As to quaternary structure, monomer or homodimer; in equilibrium, with a preference for the monomer. Dimerization may be employed to package NusB in an inactive form until recruitment into antitermination complexes.

Involved in transcription antitermination. Required for transcription of ribosomal RNA (rRNA) genes. Binds specifically to the boxA antiterminator sequence of the ribosomal RNA (rrn) operons. The sequence is that of Transcription antitermination protein NusB from Thermotoga maritima (strain ATCC 43589 / DSM 3109 / JCM 10099 / NBRC 100826 / MSB8).